A 322-amino-acid polypeptide reads, in one-letter code: Arginase (322 aa).

The Mn(2+) site is built by His113, Asp141, His143, and Asp145. Residues His143–Asn147, Ser154–Asn156, and Asp200 each bind substrate. Residues Asp247 and Asp249 each coordinate Mn(2+). Substrate contacts are provided by Thr261 and Glu292.

It belongs to the arginase family. In terms of assembly, homotrimer. Mn(2+) is required as a cofactor.

It catalyses the reaction L-arginine + H2O = urea + L-ornithine. It participates in nitrogen metabolism; urea cycle; L-ornithine and urea from L-arginine: step 1/1. The sequence is that of Arginase (ARG) from Coccidioides posadasii (strain C735) (Valley fever fungus).